The sequence spans 111 residues: Glucosamine 6-phosphate N-acetyltransferase (111 aa).

One can recognise an N-acetyltransferase domain in the interval Met-1 to Ile-111. Substrate contacts are provided by residues Lys-33 to Arg-36 and Glu-45 to Val-47. Residues Val-47–Val-49 and Arg-55–Lys-60 contribute to the acetyl-CoA site. Residues Tyr-76–Lys-77 and Asp-81 contribute to the substrate site. Tyr-90–Lys-92 serves as a coordination point for acetyl-CoA.

Belongs to the acetyltransferase family. GNA1 subfamily.

It catalyses the reaction D-glucosamine 6-phosphate + acetyl-CoA = N-acetyl-D-glucosamine 6-phosphate + CoA + H(+). The protein operates within nucleotide-sugar biosynthesis; UDP-N-acetyl-alpha-D-glucosamine biosynthesis; N-acetyl-alpha-D-glucosamine 1-phosphate from alpha-D-glucosamine 6-phosphate (route I): step 1/2. The chain is Glucosamine 6-phosphate N-acetyltransferase (gna1) from Schizosaccharomyces pombe (strain 972 / ATCC 24843) (Fission yeast).